Here is a 517-residue protein sequence, read N- to C-terminus: Keratin-associated protein 16-1 (517 aa).

Tandem repeats lie at residues 73–77 (CCDPV), 93–97 (CCEAT), 128–132 (CCQPV), 153–157 (CCEPA), 168–172 (CCQPV), 198–202 (CCQPV), 208–212 (CCSAV), 228–232 (CCQPV), 248–252 (CCDPS), 283–287 (CCVQS), and 303–307 (CCVSS). Residues 73 to 307 (CCDPVICEPS…CQEPSCCVSS (235 aa)) form an 11 X 5 AA repeats of C-C-X(3) region. The interval 483–517 (VSEEAPCQPTEAKPISPTTREAAAAQPAASKPANC) is disordered. Residues 504–517 (AAAAQPAASKPANC) are compositionally biased toward low complexity.

This sequence belongs to the KRTAP type 16 family.

The polypeptide is Keratin-associated protein 16-1 (KRTAP16-1) (Homo sapiens (Human)).